A 78-amino-acid chain; its full sequence is Large ribosomal subunit protein bL28 (78 aa).

Belongs to the bacterial ribosomal protein bL28 family.

This is Large ribosomal subunit protein bL28 from Acinetobacter baylyi (strain ATCC 33305 / BD413 / ADP1).